The sequence spans 301 residues: UDP-N-acetylenolpyruvoylglucosamine reductase (301 aa).

In terms of domain architecture, FAD-binding PCMH-type spans 24 to 190 (RVGGLAQFYD…VSAQLQLQPG (167 aa)). Arg169 is an active-site residue. Ser220 functions as the Proton donor in the catalytic mechanism. Glu290 is an active-site residue.

Belongs to the MurB family. FAD is required as a cofactor.

The protein localises to the cytoplasm. It carries out the reaction UDP-N-acetyl-alpha-D-muramate + NADP(+) = UDP-N-acetyl-3-O-(1-carboxyvinyl)-alpha-D-glucosamine + NADPH + H(+). The protein operates within cell wall biogenesis; peptidoglycan biosynthesis. In terms of biological role, cell wall formation. This chain is UDP-N-acetylenolpyruvoylglucosamine reductase, found in Synechococcus sp. (strain ATCC 27144 / PCC 6301 / SAUG 1402/1) (Anacystis nidulans).